The primary structure comprises 240 residues: Biosynthetic peptidoglycan transglycosylase (240 aa).

A helical membrane pass occupies residues 15 to 35 (WMVYLGAVVAIAWLATQAFYF).

This sequence belongs to the glycosyltransferase 51 family.

It localises to the cell inner membrane. The catalysed reaction is [GlcNAc-(1-&gt;4)-Mur2Ac(oyl-L-Ala-gamma-D-Glu-L-Lys-D-Ala-D-Ala)](n)-di-trans,octa-cis-undecaprenyl diphosphate + beta-D-GlcNAc-(1-&gt;4)-Mur2Ac(oyl-L-Ala-gamma-D-Glu-L-Lys-D-Ala-D-Ala)-di-trans,octa-cis-undecaprenyl diphosphate = [GlcNAc-(1-&gt;4)-Mur2Ac(oyl-L-Ala-gamma-D-Glu-L-Lys-D-Ala-D-Ala)](n+1)-di-trans,octa-cis-undecaprenyl diphosphate + di-trans,octa-cis-undecaprenyl diphosphate + H(+). Its pathway is cell wall biogenesis; peptidoglycan biosynthesis. Peptidoglycan polymerase that catalyzes glycan chain elongation from lipid-linked precursors. The protein is Biosynthetic peptidoglycan transglycosylase of Paraburkholderia phytofirmans (strain DSM 17436 / LMG 22146 / PsJN) (Burkholderia phytofirmans).